A 427-amino-acid chain; its full sequence is Putative zinc protease AlbF (427 aa).

Residue histidine 66 participates in Zn(2+) binding. Glutamate 69 (proton acceptor) is an active-site residue. 2 residues coordinate Zn(2+): histidine 70 and glutamate 142.

Belongs to the peptidase M16 family. Zn(2+) is required as a cofactor.

Required for production of the bacteriocin subtilosin. Could catalyze some step in the processing of presubtilosin. This Bacillus subtilis protein is Putative zinc protease AlbF (albF).